We begin with the raw amino-acid sequence, 266 residues long: MKQAIGFIDSGVGGLTVVREVLKQLPHEQVYYLGDTARCPYGPRDKEEVAQFTWEMTNFLVDRGIKMLVIACNTATAAALYDIREKLDIPVIGVIQPGSRAALKATRNNKIGVLGTLGTVESMAYPTALKGLNRRVEVDSLACPKFVSVVESGEYKSAIAKKVVAESLLPLKSTKIDTVILGCTHYPLLKPIIENFMGDGVAVINSGEETASEVSALLDYHNLLDATDDEIEHRFFTTGSTQIFKDIAKDWLNMPDMTVEHIKLGK.

Substrate is bound by residues 9-10 (DS) and 41-42 (YG). Cysteine 72 (proton donor/acceptor) is an active-site residue. 73–74 (NT) lines the substrate pocket. Catalysis depends on cysteine 183, which acts as the Proton donor/acceptor. Position 184–185 (184–185 (TH)) interacts with substrate.

The protein belongs to the aspartate/glutamate racemases family.

It catalyses the reaction L-glutamate = D-glutamate. It participates in cell wall biogenesis; peptidoglycan biosynthesis. Provides the (R)-glutamate required for cell wall biosynthesis. This Listeria innocua serovar 6a (strain ATCC BAA-680 / CLIP 11262) protein is Glutamate racemase.